Consider the following 203-residue polypeptide: A-type ATP synthase subunit E (203 aa).

Belongs to the V-ATPase E subunit family. In terms of assembly, has multiple subunits with at least A(3), B(3), C, D, E, F, H, I and proteolipid K(x).

It localises to the cell membrane. Functionally, component of the A-type ATP synthase that produces ATP from ADP in the presence of a proton gradient across the membrane. This Thermococcus sibiricus (strain DSM 12597 / MM 739) protein is A-type ATP synthase subunit E.